The chain runs to 953 residues: Nucleotide-binding oligomerization domain-containing protein 1 (953 aa).

Positions 15-107 (GCHSHIKLLK…VDLRLWLSEI (93 aa)) constitute a CARD domain. Residues 196–531 (ETVFVFGDAG…AFFTAFFLVA (336 aa)) form the NACHT domain. 202-209 (GDAGVGKS) lines the ATP pocket. Residues cysteine 558 and cysteine 567 are each lipidated (S-palmitoyl cysteine). LRR repeat units follow at residues 702–725 (FHRQ…ELQP), 727–750 (FSRL…VLCE), 755–778 (YKIV…YVAQ), 783–806 (CRGL…CVAL), 839–862 (HPSL…SLAQ), 867–890 (NTTL…CFAE), 895–918 (NQTL…QLAR), and 923–946 (NTAI…VFEN). Cysteine 952 carries the S-palmitoyl cysteine lipid modification.

This sequence belongs to the NOD1-NOD2 family. Homooligomer: homooligomerizes following ligand-binding, promoting RIPK2 recruitment. Interacts (via CARD domain) with RIPK2 (via CARD domain). Following RIPK2 recruitment, RIPK2 homooligomerizes via its CARD domain and forms long filaments named RIPosomes. Interacts (via CARD domain) with ubiquitin; inhibiting interaction with RIPK2. Interacts with ARHGEF2. Interacts with NLRP10 and recruits it to the cell membrane following invasive bacterial infection. Interacts with IFIH1; this interaction promotes transcription of antiviral genes and inhibition of viral replication. Interacts with Irgm1; promoting NOD1 degradation. Interacts with ATG16L1. In terms of processing, ubiquitinated. 'Lys-48'-linked polyubiquitination by RNF34 promotes proteasomal degradation and thereby negatively regulates NOD1 for instance in NF-kappa-B activation. Palmitoylated. Palmitoylation is required for proper recruitment to the bacterial entry site and hence for proper signaling upon cognate peptidoglycan detection. Post-translationally, degraded via selective autophagy following interaction with Irgm1. Irgm1 promotes NOD1-RIPK2 RIPosome recruitment to autophagosome membranes, promoting their SQSTM1/p62-dependent autophagic degradation. As to expression, although ubiquitously expressed, NOD1 levels are more abundant in immune cells, the gastrointestinal tract, and adipose tissue.

The protein resides in the cell membrane. It is found in the apical cell membrane. The protein localises to the basolateral cell membrane. Its subcellular location is the cytoplasm. In terms of biological role, pattern recognition receptor (PRR) that detects bacterial peptidoglycan fragments and other danger signals and thus participates in both innate and adaptive immune responses. Specifically recognizes and binds gamma-D-glutamyl-meso-diaminopimelic acid (iE-DAP), a dipeptide present in peptidoglycan of Gram-negative bacteria. Preferentially binds iE-DAP in tetrapeptide-containing muropeptides (MurNAc-TetraDAP or TetraDAP). Ligand binding triggers oligomerization that facilitates the binding and subsequent activation of the proximal adapter receptor-interacting RIPK2. Following recruitment, RIPK2 undergoes 'Met-1'- (linear) and 'Lys-63'-linked polyubiquitination by E3 ubiquitin-protein ligases XIAP, BIRC2, BIRC3 and the LUBAC complex, becoming a scaffolding protein for downstream effectors, triggering activation of the NF-kappa-B and MAP kinases signaling. This in turn leads to the transcriptional activation of hundreds of genes involved in immune response. Also acts as a regulator of antiviral response elicited by dsRNA and the expression of RLR pathway members by targeting IFIH1 and TRAF3 to modulate the formation of IFIH1-MAVS and TRAF3-MAVS complexes leading to increased transcription of type I IFNs. Also acts as a regulator of autophagy via its interaction with ATG16L1, possibly by recruiting ATG16L1 at the site of bacterial entry. Besides recognizing pathogens, also involved in the endoplasmic reticulum stress response: acts by sensing and binding to the cytosolic metabolite sphingosine-1-phosphate generated in response to endoplasmic reticulum stress, initiating an inflammation process that leads to activation of the NF-kappa-B and MAP kinases signaling. In addition, plays a role in insulin trafficking in beta cells in a cell-autonomous manner. Mechanistically, upon recognizing cognate ligands, NOD1 and RIPK2 localize to insulin vesicles where they recruit RAB1A to direct insulin trafficking through the cytoplasm. In Mus musculus (Mouse), this protein is Nucleotide-binding oligomerization domain-containing protein 1.